Here is a 529-residue protein sequence, read N- to C-terminus: Cytochrome P450 monooxygenase 45 (529 aa).

Residues 24–44 traverse the membrane as a helical segment; the sequence is VLTICILALLTFVLREIVLYF. N-linked (GlcNAc...) asparagine glycosylation is found at Asn-185 and Asn-322. Residue Cys-454 coordinates heme.

Belongs to the cytochrome P450 family. Heme is required as a cofactor.

The protein resides in the membrane. It functions in the pathway secondary metabolite biosynthesis. Functionally, cytochrome P450 monooxygenase that is able to use trans-stilbene as a substrate for oxidation. The protein is Cytochrome P450 monooxygenase 45 of Postia placenta (strain ATCC 44394 / Madison 698-R) (Brown rot fungus).